Consider the following 349-residue polypeptide: Phosphate acetyltransferase (349 aa).

This sequence belongs to the phosphate acetyltransferase and butyryltransferase family.

It is found in the cytoplasm. It carries out the reaction acetyl-CoA + phosphate = acetyl phosphate + CoA. Its pathway is metabolic intermediate biosynthesis; acetyl-CoA biosynthesis; acetyl-CoA from acetate: step 2/2. This is Phosphate acetyltransferase (pta) from Rickettsia felis (strain ATCC VR-1525 / URRWXCal2) (Rickettsia azadi).